The primary structure comprises 206 residues: Ribosomal RNA small subunit methyltransferase G (206 aa).

S-adenosyl-L-methionine contacts are provided by residues Gly74, Leu79, Val125–Glu126, and Arg140.

The protein belongs to the methyltransferase superfamily. RNA methyltransferase RsmG family.

It is found in the cytoplasm. The enzyme catalyses guanosine(527) in 16S rRNA + S-adenosyl-L-methionine = N(7)-methylguanosine(527) in 16S rRNA + S-adenosyl-L-homocysteine. Specifically methylates the N7 position of guanine in position 527 of 16S rRNA. The sequence is that of Ribosomal RNA small subunit methyltransferase G from Shewanella sp. (strain MR-7).